The sequence spans 585 residues: MLRTHTCGELTIKDVGKKVILAGWIDRIRDLGGVKFLMLRDRYGQTQIILSQNCQINLRRESVVQIEGVVQKRPEETINKDLLTGEIEVFAEKVNVFSSPEKDLPFYPGETKLPAEEIRLKYRYIDLRRKEVSDRIITRHKVTQCIRNYLSKNGFIEVETPFLTKSTPEGARDFLVPSRLKPGTFYALPQSPQLFKQLLMIGGIDRYFQVVRCFRDEDLRADRQPEFTQIDIEMSFNTMDDVLEITEGMIKHLFKEVLQVDLPGKLDRLTYNECMNKYGSDKPDRRIGMEFFDLSKHFKTCEYHAINAELSSGGVVKGFVVRDFANKMSRKLADELNEIAKSLGGGGILWFSFDSPESIKGAGAKYLQKNYNSVAKELSINYNDVCVLSAGKIDIVNTVLGEVRKILGERYFSDLRKGFDIFWVTDFPMFEYSEEENRFVAQHHPFTMPNLDDLKKYKNSDLSKIRAQSYDIVINGFEVGSGSIRIHDAELQREIFKLMRLTEEEVKLKFGFLLEAFQYGAPPHGGIALGLDRLTAIICGVPTIREVIAFPKTSSGICPLTGAPDVVNQKQLDELKIILGGDHCE.

L-aspartate is bound at residue E169. The tract at residues 193–196 is aspartate; it reads QLFK. R215 contacts L-aspartate. Residues 215–217 and Q224 each bind ATP; that span reads RDE. H443 is a binding site for L-aspartate. E478 lines the ATP pocket. Residue R485 participates in L-aspartate binding. ATP is bound at residue 530 to 533; it reads GLDR.

Belongs to the class-II aminoacyl-tRNA synthetase family. Type 1 subfamily. In terms of assembly, homodimer.

It localises to the cytoplasm. The catalysed reaction is tRNA(Asp) + L-aspartate + ATP = L-aspartyl-tRNA(Asp) + AMP + diphosphate. Functionally, catalyzes the attachment of L-aspartate to tRNA(Asp) in a two-step reaction: L-aspartate is first activated by ATP to form Asp-AMP and then transferred to the acceptor end of tRNA(Asp). This chain is Aspartate--tRNA ligase, found in Pseudothermotoga lettingae (strain ATCC BAA-301 / DSM 14385 / NBRC 107922 / TMO) (Thermotoga lettingae).